Here is a 141-residue protein sequence, read N- to C-terminus: MGRYSGHGGTHTKKKQYKRARSTKNRAKDIDQIFDEIQPETIDKFSKFEVDPDLPGMGQNYCIHCSKHFVTNEDLQSHIKGKPHKIRVKELKTKPYSLAESQIPVDNGVKLNRDANGVPTTTDVTGTIKKSTTTTTTTTTV.

A disordered region spans residues 1-32; the sequence is MGRYSGHGGTHTKKKQYKRARSTKNRAKDIDQ. Over residues 10-25 the composition is skewed to basic residues; the sequence is THTKKKQYKRARSTKN. The C2H2-type zinc-finger motif lies at 60-84; that stretch reads NYCIHCSKHFVTNEDLQSHIKGKPH.

Belongs to the ZNF593/BUD20 C2H2-type zinc-finger protein family. Associates with pre-60S ribosomal particles; released from the pre-60S particle very early in the cytoplasm.

It localises to the nucleus. Its subcellular location is the cytoplasm. Involved in pre-60S ribosomal particles maturation by promoting the nuclear export of the 60S ribosome. The chain is Zinc finger protein 593 homolog from Dictyostelium discoideum (Social amoeba).